The following is a 96-amino-acid chain: Large ribosomal subunit protein uL23 (96 aa).

This sequence belongs to the universal ribosomal protein uL23 family. In terms of assembly, part of the 50S ribosomal subunit. Contacts protein L29, and trigger factor when it is bound to the ribosome.

Its function is as follows. One of the early assembly proteins it binds 23S rRNA. One of the proteins that surrounds the polypeptide exit tunnel on the outside of the ribosome. Forms the main docking site for trigger factor binding to the ribosome. In Alkaliphilus oremlandii (strain OhILAs) (Clostridium oremlandii (strain OhILAs)), this protein is Large ribosomal subunit protein uL23.